Reading from the N-terminus, the 392-residue chain is 2,3-bisphosphoglycerate-independent phosphoglycerate mutase (392 aa).

The protein belongs to the BPG-independent phosphoglycerate mutase family. A-PGAM subfamily.

It catalyses the reaction (2R)-2-phosphoglycerate = (2R)-3-phosphoglycerate. It functions in the pathway carbohydrate degradation; glycolysis; pyruvate from D-glyceraldehyde 3-phosphate: step 3/5. Functionally, catalyzes the interconversion of 2-phosphoglycerate and 3-phosphoglycerate. In Methanothrix thermoacetophila (strain DSM 6194 / JCM 14653 / NBRC 101360 / PT) (Methanosaeta thermophila), this protein is 2,3-bisphosphoglycerate-independent phosphoglycerate mutase.